A 417-amino-acid polypeptide reads, in one-letter code: Serine--tRNA ligase (417 aa).

Threonine 232 to glutamate 234 provides a ligand contact to L-serine. Residues arginine 263 to glutamate 265 and valine 279 contribute to the ATP site. Glutamate 286 contacts L-serine. Glutamate 350–serine 353 serves as a coordination point for ATP. L-serine is bound at residue serine 385.

Belongs to the class-II aminoacyl-tRNA synthetase family. Type-1 seryl-tRNA synthetase subfamily. Homodimer. The tRNA molecule binds across the dimer.

Its subcellular location is the cytoplasm. It carries out the reaction tRNA(Ser) + L-serine + ATP = L-seryl-tRNA(Ser) + AMP + diphosphate + H(+). The catalysed reaction is tRNA(Sec) + L-serine + ATP = L-seryl-tRNA(Sec) + AMP + diphosphate + H(+). It functions in the pathway aminoacyl-tRNA biosynthesis; selenocysteinyl-tRNA(Sec) biosynthesis; L-seryl-tRNA(Sec) from L-serine and tRNA(Sec): step 1/1. Functionally, catalyzes the attachment of serine to tRNA(Ser). Is also able to aminoacylate tRNA(Sec) with serine, to form the misacylated tRNA L-seryl-tRNA(Sec), which will be further converted into selenocysteinyl-tRNA(Sec). The chain is Serine--tRNA ligase from Leptospira interrogans serogroup Icterohaemorrhagiae serovar copenhageni (strain Fiocruz L1-130).